The chain runs to 253 residues: 3-dehydroquinate dehydratase (253 aa).

Residues 46–48 (EWR) and Arg-82 contribute to the 3-dehydroquinate site. The active-site Proton donor/acceptor is the His-143. Residue Lys-170 is the Schiff-base intermediate with substrate of the active site. Arg-213, Ser-232, and Gln-236 together coordinate 3-dehydroquinate.

This sequence belongs to the type-I 3-dehydroquinase family. Homodimer.

The catalysed reaction is 3-dehydroquinate = 3-dehydroshikimate + H2O. It participates in metabolic intermediate biosynthesis; chorismate biosynthesis; chorismate from D-erythrose 4-phosphate and phosphoenolpyruvate: step 3/7. Involved in the third step of the chorismate pathway, which leads to the biosynthesis of aromatic amino acids. Catalyzes the cis-dehydration of 3-dehydroquinate (DHQ) and introduces the first double bond of the aromatic ring to yield 3-dehydroshikimate. The polypeptide is 3-dehydroquinate dehydratase (Bacillus velezensis (strain DSM 23117 / BGSC 10A6 / LMG 26770 / FZB42) (Bacillus amyloliquefaciens subsp. plantarum)).